Reading from the N-terminus, the 276-residue chain is Dermonecrotic toxin LlSicTox-alphaIV2i (276 aa).

Residue histidine 5 is part of the active site. Residues glutamate 25 and aspartate 27 each coordinate Mg(2+). The Nucleophile role is filled by histidine 41. Disulfide bonds link cysteine 45/cysteine 51 and cysteine 47/cysteine 193. Aspartate 85 is a binding site for Mg(2+).

It belongs to the arthropod phospholipase D family. Class II subfamily. Mg(2+) is required as a cofactor. In terms of tissue distribution, expressed by the venom gland.

It is found in the secreted. The catalysed reaction is an N-(acyl)-sphingosylphosphocholine = an N-(acyl)-sphingosyl-1,3-cyclic phosphate + choline. It carries out the reaction an N-(acyl)-sphingosylphosphoethanolamine = an N-(acyl)-sphingosyl-1,3-cyclic phosphate + ethanolamine. It catalyses the reaction a 1-acyl-sn-glycero-3-phosphocholine = a 1-acyl-sn-glycero-2,3-cyclic phosphate + choline. The enzyme catalyses a 1-acyl-sn-glycero-3-phosphoethanolamine = a 1-acyl-sn-glycero-2,3-cyclic phosphate + ethanolamine. In terms of biological role, dermonecrotic toxins cleave the phosphodiester linkage between the phosphate and headgroup of certain phospholipids (sphingolipid and lysolipid substrates), forming an alcohol (often choline) and a cyclic phosphate. This toxin acts on sphingomyelin (SM). It may also act on ceramide phosphoethanolamine (CPE), lysophosphatidylcholine (LPC) and lysophosphatidylethanolamine (LPE), but not on lysophosphatidylserine (LPS), and lysophosphatidylglycerol (LPG). It acts by transphosphatidylation, releasing exclusively cyclic phosphate products as second products. Induces dermonecrosis, hemolysis, increased vascular permeability, edema, inflammatory response, and platelet aggregation. This is Dermonecrotic toxin LlSicTox-alphaIV2i from Loxosceles laeta (South American recluse spider).